The sequence spans 308 residues: Ribosomal RNA large subunit methyltransferase F (308 aa).

The disordered stretch occupies residues 190–212 (DSAASARAGSERKRRNLGQDKND).

It belongs to the methyltransferase superfamily. METTL16/RlmF family.

Its subcellular location is the cytoplasm. The enzyme catalyses adenosine(1618) in 23S rRNA + S-adenosyl-L-methionine = N(6)-methyladenosine(1618) in 23S rRNA + S-adenosyl-L-homocysteine + H(+). Functionally, specifically methylates the adenine in position 1618 of 23S rRNA. The chain is Ribosomal RNA large subunit methyltransferase F from Citrobacter koseri (strain ATCC BAA-895 / CDC 4225-83 / SGSC4696).